Consider the following 747-residue polypeptide: Phosphoribosylformylglycinamidine synthase subunit PurL (747 aa).

His46 is a catalytic residue. ATP is bound by residues Tyr49 and Lys88. Glu90 serves as a coordination point for Mg(2+). Residues 91-94 and Arg113 each bind substrate; that span reads SHNH. The Proton acceptor role is filled by His92. Asp114 contacts Mg(2+). Gln237 provides a ligand contact to substrate. Asp265 lines the Mg(2+) pocket. 309–311 is a substrate binding site; it reads ESQ. Asp493 and Gly530 together coordinate ATP. Position 531 (Asn531) interacts with Mg(2+). Residue Ser533 coordinates substrate.

Belongs to the FGAMS family. In terms of assembly, monomer. Part of the FGAM synthase complex composed of 1 PurL, 1 PurQ and 2 PurS subunits.

Its subcellular location is the cytoplasm. The catalysed reaction is N(2)-formyl-N(1)-(5-phospho-beta-D-ribosyl)glycinamide + L-glutamine + ATP + H2O = 2-formamido-N(1)-(5-O-phospho-beta-D-ribosyl)acetamidine + L-glutamate + ADP + phosphate + H(+). The protein operates within purine metabolism; IMP biosynthesis via de novo pathway; 5-amino-1-(5-phospho-D-ribosyl)imidazole from N(2)-formyl-N(1)-(5-phospho-D-ribosyl)glycinamide: step 1/2. Its function is as follows. Part of the phosphoribosylformylglycinamidine synthase complex involved in the purines biosynthetic pathway. Catalyzes the ATP-dependent conversion of formylglycinamide ribonucleotide (FGAR) and glutamine to yield formylglycinamidine ribonucleotide (FGAM) and glutamate. The FGAM synthase complex is composed of three subunits. PurQ produces an ammonia molecule by converting glutamine to glutamate. PurL transfers the ammonia molecule to FGAR to form FGAM in an ATP-dependent manner. PurS interacts with PurQ and PurL and is thought to assist in the transfer of the ammonia molecule from PurQ to PurL. The chain is Phosphoribosylformylglycinamidine synthase subunit PurL from Deinococcus radiodurans (strain ATCC 13939 / DSM 20539 / JCM 16871 / CCUG 27074 / LMG 4051 / NBRC 15346 / NCIMB 9279 / VKM B-1422 / R1).